Here is a 1123-residue protein sequence, read N- to C-terminus: Leucine--tRNA ligase, cytoplasmic (1123 aa).

Residues 84–94 (PYMNGRLHAGH) carry the 'HIGH' region motif. Residues 757 to 761 (KMSKS) carry the 'KMSKS' region motif. K760 contributes to the ATP binding site.

This sequence belongs to the class-I aminoacyl-tRNA synthetase family.

It is found in the cytoplasm. It carries out the reaction tRNA(Leu) + L-leucine + ATP = L-leucyl-tRNA(Leu) + AMP + diphosphate. The sequence is that of Leucine--tRNA ligase, cytoplasmic (leu-6) from Neurospora crassa (strain ATCC 24698 / 74-OR23-1A / CBS 708.71 / DSM 1257 / FGSC 987).